The primary structure comprises 537 residues: Glucocorticoid-induced transcript 1 protein (537 aa).

Disordered stretches follow at residues 1 to 45 (MSTA…APAA) and 62 to 254 (LLRG…HGNH). Residues serine 69, serine 96, serine 98, and serine 99 each carry the phosphoserine modification. Positions 69 to 86 (SPTRPAAAATAAAALGSL) are enriched in low complexity. Residues 97 to 106 (PSSPTPPPAA) are compositionally biased toward pro residues. The residue at position 101 (threonine 101) is a Phosphothreonine. Basic and acidic residues predominate over residues 121–136 (RSPESRRRSSSPERRS). Residues 152–168 (IRTSSTIRRTSSLDTIT) show a composition bias toward low complexity. Phosphoserine occurs at positions 162 and 163. Threonine 166 and threonine 168 each carry phosphothreonine. Residues 178–192 (RDPHVHYPSCMRDKA) show a composition bias toward basic and acidic residues. Position 214 is a phosphoserine (serine 214). Residues 217–244 (SADQLKEIAKLRQQLQRSKQSSRHSKEK) are a coiled coil. Serine 248 is subject to Phosphoserine. Threonine 256 is modified (phosphothreonine). The residue at position 293 (serine 293) is a Phosphoserine. Basic and acidic residues predominate over residues 309–321 (EVSKPLDIPDGRR). Residues 309–407 (EVSKPLDIPD…KPNNSYMFKR (99 aa)) are disordered. The segment covering 329–346 (RSSSTRSIDTQTPSVQER) has biased composition (polar residues). A Phosphothreonine modification is found at threonine 333. At serine 335 the chain carries Phosphoserine. At threonine 340 the chain carries Phosphothreonine. Low complexity predominate over residues 347 to 359 (SSSCSSHSPCVSP). Serine 384, serine 388, serine 396, serine 402, and serine 470 each carry phosphoserine. A disordered region spans residues 495-520 (SLSDDTSTADSLEPSAQQPSQQQQLL).

Predominantly expressed in thymus and testis, especially in CD4+CD8+ cells and at specific stages of spermatogenesis.

The chain is Glucocorticoid-induced transcript 1 protein (Glcci1) from Mus musculus (Mouse).